Reading from the N-terminus, the 282-residue chain is Bifunctional protein FolD (282 aa).

NADP(+)-binding positions include 164–166 (GAS), I189, and I230.

The protein belongs to the tetrahydrofolate dehydrogenase/cyclohydrolase family. Homodimer.

The catalysed reaction is (6R)-5,10-methylene-5,6,7,8-tetrahydrofolate + NADP(+) = (6R)-5,10-methenyltetrahydrofolate + NADPH. It catalyses the reaction (6R)-5,10-methenyltetrahydrofolate + H2O = (6R)-10-formyltetrahydrofolate + H(+). Its pathway is one-carbon metabolism; tetrahydrofolate interconversion. Functionally, catalyzes the oxidation of 5,10-methylenetetrahydrofolate to 5,10-methenyltetrahydrofolate and then the hydrolysis of 5,10-methenyltetrahydrofolate to 10-formyltetrahydrofolate. In Nitratiruptor sp. (strain SB155-2), this protein is Bifunctional protein FolD.